The following is a 382-amino-acid chain: Flap endonuclease 1-A (382 aa).

Residues 1-104 (MGIHGLAKLI…GELAKRSERR (104 aa)) form an N-domain region. Asp34 contacts Mg(2+). DNA-binding residues include Arg47 and Arg70. Residues Asp86, Glu158, Glu160, Asp179, and Asp181 each contribute to the Mg(2+) site. The I-domain stretch occupies residues 122-253 (NIEKFTKRLV…KRAIDLIRQH (132 aa)). Glu158 provides a ligand contact to DNA. Residues Gly231 and Asp233 each coordinate DNA. Position 233 (Asp233) interacts with Mg(2+). The segment at 336 to 344 (TQGRLDDFF) is interaction with PCNA. The disordered stretch occupies residues 350–382 (VSSTKRKEAESKGSAKKKAKTGGTPAGKFKRGK).

The protein belongs to the XPG/RAD2 endonuclease family. FEN1 subfamily. As to quaternary structure, interacts with PCNA. Three molecules of fen1 bind to one PCNA trimer with each molecule binding to one PCNA monomer. PCNA stimulates the nuclease activity without altering cleavage specificity. Requires Mg(2+) as cofactor. Post-translationally, phosphorylated. Phosphorylation upon DNA damage induces relocalization to the nuclear plasma.

It is found in the nucleus. The protein localises to the nucleolus. Its subcellular location is the nucleoplasm. It localises to the mitochondrion. Its function is as follows. Structure-specific nuclease with 5'-flap endonuclease and 5'-3' exonuclease activities involved in DNA replication and repair. During DNA replication, cleaves the 5'-overhanging flap structure that is generated by displacement synthesis when DNA polymerase encounters the 5'-end of a downstream Okazaki fragment. It enters the flap from the 5'-end and then tracks to cleave the flap base, leaving a nick for ligation. Also involved in the long patch base excision repair (LP-BER) pathway, by cleaving within the apurinic/apyrimidinic (AP) site-terminated flap. Acts as a genome stabilization factor that prevents flaps from equilibrating into structures that lead to duplications and deletions. Also possesses 5'-3' exonuclease activity on nicked or gapped double-stranded DNA, and exhibits RNase H activity. Also involved in replication and repair of rDNA and in repairing mitochondrial DNA. This chain is Flap endonuclease 1-A (fen1-a), found in Xenopus laevis (African clawed frog).